We begin with the raw amino-acid sequence, 209 residues long: Bacteriorhodopsin (209 aa).

Residues 1 to 17 traverse the membrane as a helical segment; it reads LWLGTAGMFLGMLYFIA. The Cytoplasmic segment spans residues 18 to 31; it reads RGWGETDGRRQKFY. The chain crosses the membrane as a helical span at residues 32 to 50; it reads IATILITAIAFVNYLAMAL. The Extracellular portion of the chain corresponds to 51 to 66; sequence GFGLTFIEFGGEQHPI. Residues 67-84 traverse the membrane as a helical segment; it reads YWARYTDWLFTTPLLLYD. Topologically, residues 85–95 are cytoplasmic; it reads LGLLAGADRNT. A helical membrane pass occupies residues 96-115; the sequence is IYSLVSLDVLMIGTGVVATL. Residues 116–128 lie on the Extracellular side of the membrane; that stretch reads SAGSGVLSAGAER. Residues 129-148 form a helical membrane-spanning segment; that stretch reads LVWWGISTAFLLVLLYFLFS. At 149–166 the chain is on the cytoplasmic side; sequence SLSGRVANLPSDTRSTFK. Residues 167–185 traverse the membrane as a helical segment; the sequence is TLRNLVTVVWLVYPVWWLV. Over 186-197 the chain is Extracellular; sequence GSEGLGLVGIGI. Residues 198–209 traverse the membrane as a helical segment; that stretch reads ETAGFMVIDLVA.

The protein belongs to the archaeal/bacterial/fungal opsin family.

The protein resides in the cell membrane. In terms of biological role, light-driven proton pump. The sequence is that of Bacteriorhodopsin (bop) from Halobacterium halobium (strain shark).